The sequence spans 160 residues: NADH-quinone oxidoreductase subunit B (160 aa).

[4Fe-4S] cluster-binding residues include Cys-37, Cys-38, Cys-102, and Cys-132.

This sequence belongs to the complex I 20 kDa subunit family. In terms of assembly, NDH-1 is composed of 14 different subunits. Subunits NuoB, C, D, E, F, and G constitute the peripheral sector of the complex. Requires [4Fe-4S] cluster as cofactor.

It localises to the cell inner membrane. The catalysed reaction is a quinone + NADH + 5 H(+)(in) = a quinol + NAD(+) + 4 H(+)(out). Its function is as follows. NDH-1 shuttles electrons from NADH, via FMN and iron-sulfur (Fe-S) centers, to quinones in the respiratory chain. Couples the redox reaction to proton translocation (for every two electrons transferred, four hydrogen ions are translocated across the cytoplasmic membrane), and thus conserves the redox energy in a proton gradient. The polypeptide is NADH-quinone oxidoreductase subunit B (Neisseria gonorrhoeae (strain ATCC 700825 / FA 1090)).